Here is a 124-residue protein sequence, read N- to C-terminus: Holo-[acyl-carrier-protein] synthase (124 aa).

Mg(2+) is bound by residues D8 and E56.

It belongs to the P-Pant transferase superfamily. AcpS family. Requires Mg(2+) as cofactor.

It is found in the cytoplasm. The catalysed reaction is apo-[ACP] + CoA = holo-[ACP] + adenosine 3',5'-bisphosphate + H(+). In terms of biological role, transfers the 4'-phosphopantetheine moiety from coenzyme A to a Ser of acyl-carrier-protein. This Maridesulfovibrio salexigens (strain ATCC 14822 / DSM 2638 / NCIMB 8403 / VKM B-1763) (Desulfovibrio salexigens) protein is Holo-[acyl-carrier-protein] synthase.